A 345-amino-acid chain; its full sequence is Quinolinate synthase (345 aa).

Iminosuccinate is bound by residues His69 and Ser87. Cys132 provides a ligand contact to [4Fe-4S] cluster. Residues 158 to 160 (YVN) and Ser175 each bind iminosuccinate. A [4Fe-4S] cluster-binding site is contributed by Cys217. Residues 243-245 (HPE) and Thr260 each bind iminosuccinate. Position 303 (Cys303) interacts with [4Fe-4S] cluster.

The protein belongs to the quinolinate synthase family. Type 2 subfamily. [4Fe-4S] cluster is required as a cofactor.

It localises to the cytoplasm. The catalysed reaction is iminosuccinate + dihydroxyacetone phosphate = quinolinate + phosphate + 2 H2O + H(+). It participates in cofactor biosynthesis; NAD(+) biosynthesis; quinolinate from iminoaspartate: step 1/1. Functionally, catalyzes the condensation of iminoaspartate with dihydroxyacetone phosphate to form quinolinate. The sequence is that of Quinolinate synthase from Agrobacterium fabrum (strain C58 / ATCC 33970) (Agrobacterium tumefaciens (strain C58)).